The sequence spans 201 residues: dTTP/UTP pyrophosphatase (201 aa).

D79 functions as the Proton acceptor in the catalytic mechanism.

This sequence belongs to the Maf family. YhdE subfamily. A divalent metal cation serves as cofactor.

It is found in the cytoplasm. The catalysed reaction is dTTP + H2O = dTMP + diphosphate + H(+). The enzyme catalyses UTP + H2O = UMP + diphosphate + H(+). Its function is as follows. Nucleoside triphosphate pyrophosphatase that hydrolyzes dTTP and UTP. May have a dual role in cell division arrest and in preventing the incorporation of modified nucleotides into cellular nucleic acids. This chain is dTTP/UTP pyrophosphatase, found in Hahella chejuensis (strain KCTC 2396).